Consider the following 993-residue polypeptide: Structural polyprotein (993 aa).

Asp11 serves as a coordination point for a divalent metal cation. One can recognise a Peptidase S50 domain in the interval 494-736; the sequence is ADKGYEVVAN…AGRQYHLAMA (243 aa). Catalysis depends on Ser633, which acts as the Nucleophile. The active site involves Lys673. Residues 950–993 form a disordered region; the sequence is AMEMKHRNPRRALPKPKPKPNAPTQRPPGRLGRWIRTVSDEDLE. A compositionally biased stretch (basic residues) spans 956-967; it reads RNPRRALPKPKP. Residues 984–993 are interaction with VP1 protein; that stretch reads IRTVSDEDLE.

Homotrimer. A central divalent metal stabilizes the VP2 trimer. Interacts with host ITGA4/ITGB1. In terms of assembly, homodimer. Interacts (via C-terminus) with VP1 in the cytoplasm. Interacts with VP2. In terms of processing, specific enzymatic cleavages yield mature proteins. The capsid assembly seems to be regulated by polyprotein processing. The protease VP4 cleaves itself off the polyprotein, thus releasing pre-VP2 and VP3 within the infected cell. During capsid assembly, the C-terminus of pre-VP2 is further processed by VP4, giving rise to VP2, the external capsid protein and three small peptides that all stay closely associated with the capsid.

It is found in the virion. Its subcellular location is the host cytoplasm. Functionally, capsid protein VP2 self assembles to form an icosahedral capsid with a T=13 symmetry, about 70 nm in diameter, and consisting of 260 VP2 trimers. The capsid encapsulates the genomic dsRNA. VP2 is also involved in attachment and entry into the host cell by interacting with host ITGA4/ITGB1. The precursor of VP2 plays an important role in capsid assembly. First, pre-VP2 and VP2 oligomers assemble to form a procapsid. Then, the pre-VP2 intermediates may be processed into VP2 proteins by proteolytic cleavage mediated by VP4 to obtain the mature virion. The final capsid is composed of pentamers and hexamers but VP2 has a natural tendency to assemble into all-pentameric structures. Therefore pre-VP2 may be required to allow formation of the hexameric structures. Its function is as follows. Protease VP4 is a serine protease that cleaves the polyprotein into its final products. Pre-VP2 is first partially cleaved, and may be completely processed by VP4 upon capsid maturation. In terms of biological role, capsid protein VP3 plays a key role in virion assembly by providing a scaffold for the capsid made of VP2. May self-assemble to form a T=4-like icosahedral inner-capsid composed of at least 180 trimers. Plays a role in genomic RNA packaging by recruiting VP1 into the capsid and interacting with the dsRNA genome segments to form a ribonucleoprotein complex. Additionally, the interaction of the VP3 C-terminal tail with VP1 removes the inherent structural blockade of the polymerase active site. Thus, VP3 can also function as a transcriptional activator. Functionally, structural peptide 1 is a small peptide derived from pre-VP2 C-terminus. It destabilizes and perforates cell membranes, suggesting a role during entry. Structural peptide 2 is a small peptide derived from pVP2 C-terminus. It is not essential for the virus viability, but viral growth is affected when missing. Its function is as follows. Structural peptide 3 is a small peptide derived from pVP2 C-terminus. It is not essential for the virus viability, but viral growth is affected when missing. In terms of biological role, structural peptide 4 is a small peptide derived from pVP2 C-terminus. It is essential for the virus viability. The sequence is that of Structural polyprotein from Avian infectious bursal disease virus (strain PBG-98) (IBDV).